The chain runs to 168 residues: Sensor histidine kinase component HK1 (168 aa).

The region spanning 1 to 141 (MPITPLLHES…ELRITLPTPR (141 aa)) is the Histidine kinase; second part domain. Residues 137–168 (LPTPRPPFHEELPRITSSDTKDPNREHDTSDQ) are disordered. The segment covering 143 to 168 (PFHEELPRITSSDTKDPNREHDTSDQ) has biased composition (basic and acidic residues).

As to quaternary structure, interacts with HK2.

It carries out the reaction ATP + protein L-histidine = ADP + protein N-phospho-L-histidine.. In terms of biological role, member of the three-protein two-component system HK1/HK2/TcrA. Kinase that binds ATP and catalyzes the transfer of a phosphoryl group from ATP to HK2. The chain is Sensor histidine kinase component HK1 from Mycobacterium tuberculosis (strain ATCC 25618 / H37Rv).